The chain runs to 87 residues: MKKTFSFTVLILFVIPLLVTGLMDSMPQRHPVEGWCKRPLPNQKPGPCNNDRCSARCKEQKQFEFKGGKAMGICSSENRCLCTFRCR.

Residues methionine 1–glycine 21 form the signal peptide. Intrachain disulfides connect cysteine 36/cysteine 86, cysteine 48/cysteine 74, cysteine 53/cysteine 80, and cysteine 57/cysteine 82.

It belongs to the DEFL family.

The protein localises to the secreted. This is Putative defensin-like protein 169 from Arabidopsis thaliana (Mouse-ear cress).